A 559-amino-acid polypeptide reads, in one-letter code: MAAQGFLLIASFLLILLVLAKPLGSGLARLIAAVPLPGVAGIERILWRTLGITDHEMNWRQYLLALLTLNLLGLGILFCLLFWQEWLPLNPQRLPGLSWDLALNTAVSFVTNTNWQAYSGESTLSYFSQMAGLTVQNFLSAATGIAVVFALIRAFTRQNVHTLGNAWQDLVRITLWILFPVALIIALFFIQQGVPQNLSAYQPITTLEGAKQLLPMGPVASQEAIKMLGTNGGGFFNANSSHPFENPTALTNLAQMLAIFLIPAALCFAFGEAAGDRRQGRALLWAMSFIFVVCVAVVMWAEVQGNPHLLAAGADSSVNMEGKETRFGVLASSLFAVVTTAASCGAVNAMHDSFTALGGMVPMWLMQIGEVVFGGVGSGLYGMLLFVLLAVFIAGLMIGRTPEYLGKKIDVREMKMTALAILVTPMLVLLGSALAMMTDAGRSAMLNPGPHGFSEVLYAVSSAANNNGSAFAGLSANSPFWNCLLAFCMFVGRFGVIIPVMAIAGSLVSKKVQPASQGTLATHGALFIGLLIGTVLLVGALTFIPALALGPVAEHFSLP.

13 helical membrane-spanning segments follow: residues 5–25 (GFLL…PLGS), 27–47 (LARL…RILW), 63–83 (LLAL…LLFW), 132–152 (GLTV…FALI), 170–190 (LVRI…LFFI), 253–273 (LAQM…FGEA), 283–303 (LLWA…WAEV), 327–347 (FGVL…CGAV), 356–376 (ALGG…FGGV), 379–399 (GLYG…LMIG), 416–436 (MTAL…ALAM), 484–504 (LLAF…MAIA), and 524–544 (GALF…LTFI).

Belongs to the KdpA family. The system is composed of three essential subunits: KdpA, KdpB and KdpC.

Its subcellular location is the cell inner membrane. Part of the high-affinity ATP-driven potassium transport (or Kdp) system, which catalyzes the hydrolysis of ATP coupled with the electrogenic transport of potassium into the cytoplasm. This subunit binds the periplasmic potassium ions and delivers the ions to the membrane domain of KdpB through an intramembrane tunnel. In Salmonella heidelberg (strain SL476), this protein is Potassium-transporting ATPase potassium-binding subunit.